Reading from the N-terminus, the 880-residue chain is Alanine--tRNA ligase (880 aa).

Residues His-566, His-570, Cys-668, and His-672 each contribute to the Zn(2+) site.

It belongs to the class-II aminoacyl-tRNA synthetase family. Zn(2+) is required as a cofactor.

It localises to the cytoplasm. It catalyses the reaction tRNA(Ala) + L-alanine + ATP = L-alanyl-tRNA(Ala) + AMP + diphosphate. Functionally, catalyzes the attachment of alanine to tRNA(Ala) in a two-step reaction: alanine is first activated by ATP to form Ala-AMP and then transferred to the acceptor end of tRNA(Ala). Also edits incorrectly charged Ser-tRNA(Ala) and Gly-tRNA(Ala) via its editing domain. In Trichormus variabilis (strain ATCC 29413 / PCC 7937) (Anabaena variabilis), this protein is Alanine--tRNA ligase.